The primary structure comprises 914 residues: Caprin-2 (914 aa).

7 disordered regions span residues 259-283, 298-326, 367-411, 439-480, 495-529, 608-631, and 718-747; these read PLPK…PSGL, EFLN…KEDF, KTVD…LPKD, DGES…SSQR, CLSN…PPLY, HRSF…PELN, and GAGT…AYPL. Basic and acidic residues predominate over residues 264–273; that stretch reads DSQEKTETIK. Over residues 274-283 the composition is skewed to polar residues; sequence PDSQSRPSGL. Positions 370–392 are enriched in basic and acidic residues; it reads DIVKRSTTDPKEKRQRKKAEQDS. Residues 469–480 show a composition bias toward polar residues; it reads KSPSDILPSSQR. The span at 508-520 shows a compositional bias: basic and acidic residues; it reads LELHSEDKPRKQA. Residues 610-626 are compositionally biased toward low complexity; sequence SFTSAKTSSVTTASTQT. Residues 718-738 show a composition bias toward polar residues; the sequence is GAGTATQRSSAGWSDSSQVSS. In terms of domain architecture, C1q spans 780–914; that stretch reads LTQLRVAFSA…TFSGFLLYQD (135 aa). Ca(2+)-binding residues include Asp-865 and Glu-871.

Belongs to the caprin family. As to quaternary structure, homotrimer; via C1q domain.

It localises to the cytoplasm. It is found in the cell membrane. In terms of biological role, promotes phosphorylation of the Wnt coreceptor LRP6, leading to increased activity of the canonical Wnt signaling pathway. Facilitates constitutive LRP6 phosphorylation by CDK14/CCNY during G2/M stage of the cell cycle, which may potentiate cells for Wnt signaling. May regulate the transport and translation of mRNAs, modulating for instance the expression of proteins involved in synaptic plasticity in neurons. Involved in regulation of growth as erythroblasts shift from a highly proliferative state towards their terminal phase of differentiation. May be involved in apoptosis. This chain is Caprin-2, found in Danio rerio (Zebrafish).